Reading from the N-terminus, the 185-residue chain is ATP synthase subunit delta (185 aa).

The protein belongs to the ATPase delta chain family. In terms of assembly, F-type ATPases have 2 components, F(1) - the catalytic core - and F(0) - the membrane proton channel. F(1) has five subunits: alpha(3), beta(3), gamma(1), delta(1), epsilon(1). CF(0) has four main subunits: a(1), b(1), b'(1) and c(10-14). The alpha and beta chains form an alternating ring which encloses part of the gamma chain. F(1) is attached to F(0) by a central stalk formed by the gamma and epsilon chains, while a peripheral stalk is formed by the delta, b and b' chains.

The protein localises to the cellular thylakoid membrane. F(1)F(0) ATP synthase produces ATP from ADP in the presence of a proton or sodium gradient. F-type ATPases consist of two structural domains, F(1) containing the extramembraneous catalytic core and F(0) containing the membrane proton channel, linked together by a central stalk and a peripheral stalk. During catalysis, ATP synthesis in the catalytic domain of F(1) is coupled via a rotary mechanism of the central stalk subunits to proton translocation. In terms of biological role, this protein is part of the stalk that links CF(0) to CF(1). It either transmits conformational changes from CF(0) to CF(1) or is implicated in proton conduction. The chain is ATP synthase subunit delta from Acaryochloris marina (strain MBIC 11017).